The following is a 520-amino-acid chain: Ubiquitin carboxyl-terminal hydrolase 3 (520 aa).

Residue M1 is modified to N-acetylmethionine. The UBP-type zinc-finger motif lies at 1-121; sequence MECPHLSSSV…QKVREHLQNL (121 aa). Positions 3, 5, 29, 32, 41, 44, 49, 56, 60, 82, 95, and 98 each coordinate Zn(2+). In terms of domain architecture, USP spans 159 to 511; sequence TGLRNLGNTC…KAYILFYVEH (353 aa). The active-site Nucleophile is the C168. H471 acts as the Proton acceptor in catalysis.

The protein belongs to the peptidase C19 family. USP3 subfamily. In terms of assembly, interacts (via UBP-type domain) with H2A; the interaction is less efficient than with monoubiquitinated H2A. In terms of tissue distribution, expressed in all tissues examined, with strongest expression in pancreas.

The protein resides in the nucleus. The protein localises to the cytoplasm. It catalyses the reaction Thiol-dependent hydrolysis of ester, thioester, amide, peptide and isopeptide bonds formed by the C-terminal Gly of ubiquitin (a 76-residue protein attached to proteins as an intracellular targeting signal).. Deubiquitinase that plays a role in several cellular processes including transcriptional regulation, cell cycle progression or innate immunity. In response to DNA damage, deubiquitinates monoubiquitinated target proteins such as histone H2A and H2AX and thereby counteracts RNF168- and RNF8-mediated ubiquitination. In turn, participates in the recruitment of DNA damage repair factors to DNA break sites. Required for proper progression through S phase and subsequent mitotic entry. Acts as a positive regulator of TP53 by deubiquitinating and stabilizing it to promote normal cell proliferation and transformation. Participates in establishing tolerance innate immune memory through non-transcriptional feedback. Mechanistically, negatively regulates TLR-induced NF-kappa-B signaling by targeting and removing the 'Lys-63'-linked polyubiquitin chains on MYD88. Negatively regulates the activation of type I interferon signaling by mediating 'Lys-63'-linked polyubiquitin chains on RIGI and IFIH1. Also deubiquinates ASC/PYCARD, the central adapter mediating the assembly and activation of most inflammasomes, and thereby promotes inflammasome activation. In Homo sapiens (Human), this protein is Ubiquitin carboxyl-terminal hydrolase 3 (USP3).